The following is a 327-amino-acid chain: MAKPAKRVAVTGAAGQIAYSLLFRIANGDLLGKDQPVILQLLDLPQAQAAVKGVVMELDDCAFPLLAGVVITDDPKVAFKDADVALLVGARPRSKGMERKDLLSANAEIFTVQGAALNEVASRDVKVLVVGNPANTNAYIAMKSAPDLPKKNFTAMLRLDHNRALSQLAAKSGKPVASIEKLAVWGNHSPTMYPDFRFATAEGESLLKLINDDAWNRDTFIPTVGKRGAAIIEARGLSSAASAANAAIDHVRDWVLGTNGKWVTMGIPSDGSYGIPEDIIYGVPVTCENGEYKRVEGLEIDAFSREKMDGTLAELLEERDGVAHLLK.

12–18 (GAAGQIA) serves as a coordination point for NAD(+). Arg-93 and Arg-99 together coordinate substrate. NAD(+)-binding positions include Asn-106, Gln-113, and 130 to 132 (VGN). Positions 132 and 163 each coordinate substrate. His-188 acts as the Proton acceptor in catalysis.

This sequence belongs to the LDH/MDH superfamily. MDH type 2 family.

The enzyme catalyses (S)-malate + NAD(+) = oxaloacetate + NADH + H(+). Catalyzes the reversible oxidation of malate to oxaloacetate. The sequence is that of Malate dehydrogenase 1 from Burkholderia thailandensis (strain ATCC 700388 / DSM 13276 / CCUG 48851 / CIP 106301 / E264).